A 55-amino-acid polypeptide reads, in one-letter code: Large ribosomal subunit protein bL32c (55 aa).

The protein belongs to the bacterial ribosomal protein bL32 family.

The protein resides in the plastid. It is found in the chloroplast. The protein is Large ribosomal subunit protein bL32c of Nicotiana sylvestris (Wood tobacco).